A 126-amino-acid chain; its full sequence is MSDPRYQIDVSVVTRYLKDQSDPENDRFAFAYTITVQNNGTVKAKLMSRHWLITNGDGEVEEVRGAGVIGQQPLIEPGQSHTYSSGAVISTRVGTMQGSYQMFAEDGKRFDATIAPFRLAVPGALH.

Residues 2–126 (SDPRYQIDVS…FRLAVPGALH (125 aa)) form the ApaG domain.

This is Protein ApaG from Pseudomonas entomophila (strain L48).